The chain runs to 169 residues: Myosin regulatory light chain 11 (169 aa).

Position 2 is a n,N,N-trimethylalanine (Ala2). Residues Ser15 and Ser16 each carry the phosphoserine modification. Phosphothreonine is present on residues Thr25 and Thr35. In terms of domain architecture, EF-hand 1 spans 25 to 60; sequence TQIQEFKEAFTVIDQNRDGIIDKEDLRDTFAAMGRL. Residues Asp38, Asn40, Asp42, and Asp49 each coordinate Ca(2+). Ser75 is modified (phosphoserine). EF-hand domains lie at 95–130 and 131–166; these read DPED…QCDR and FSQE…GDAK. Phosphothreonine is present on Thr101.

In terms of assembly, myosin is a hexamer of 2 heavy chains and 4 light chains.

Myosin regulatory subunit that plays an essential role to maintain muscle integrity during early development. Plays a role in regulation of muscle contraction. This chain is Myosin regulatory light chain 11 (Myl11), found in Mus musculus (Mouse).